The chain runs to 937 residues: Isoleucine--tRNA ligase (937 aa).

A 'HIGH' region motif is present at residues Pro-58–His-68. An L-isoleucyl-5'-AMP-binding site is contributed by Glu-561. Residues Lys-602–Ser-606 carry the 'KMSKS' region motif. Lys-605 is a binding site for ATP. The Zn(2+) site is built by Cys-900, Cys-903, Cys-920, and Cys-923.

It belongs to the class-I aminoacyl-tRNA synthetase family. IleS type 1 subfamily. Monomer. Zn(2+) is required as a cofactor.

The protein localises to the cytoplasm. It catalyses the reaction tRNA(Ile) + L-isoleucine + ATP = L-isoleucyl-tRNA(Ile) + AMP + diphosphate. Catalyzes the attachment of isoleucine to tRNA(Ile). As IleRS can inadvertently accommodate and process structurally similar amino acids such as valine, to avoid such errors it has two additional distinct tRNA(Ile)-dependent editing activities. One activity is designated as 'pretransfer' editing and involves the hydrolysis of activated Val-AMP. The other activity is designated 'posttransfer' editing and involves deacylation of mischarged Val-tRNA(Ile). The chain is Isoleucine--tRNA ligase from Pectobacterium atrosepticum (strain SCRI 1043 / ATCC BAA-672) (Erwinia carotovora subsp. atroseptica).